Reading from the N-terminus, the 77-residue chain is U8-lycotoxin-Ls1p (77 aa).

The N-terminal stretch at 1 to 20 (MKLMIFTGLVLFAIVSLIEA) is a signal peptide. A propeptide spanning residues 21-26 (QAENEK) is cleaved from the precursor.

It belongs to the neurotoxin 19 (CSTX) family. 08 (U8-Lctx) subfamily. In terms of processing, contains 4 disulfide bonds. Expressed by the venom gland.

Its subcellular location is the secreted. This is U8-lycotoxin-Ls1p from Lycosa singoriensis (Wolf spider).